Here is a 230-residue protein sequence, read N- to C-terminus: Probable endonuclease C19F8.04c (230 aa).

The helical transmembrane segment at Ala-10–Leu-27 threads the bilayer. The TNase-like domain occupies Lys-55–Gln-216. The active site involves Arg-104. A Ca(2+)-binding site is contributed by Asp-109. Active-site residues include Glu-112 and Arg-152.

This sequence belongs to the LCL3 family.

Its subcellular location is the mitochondrion. It localises to the membrane. The polypeptide is Probable endonuclease C19F8.04c (Schizosaccharomyces pombe (strain 972 / ATCC 24843) (Fission yeast)).